The sequence spans 785 residues: Protein SEY1 (785 aa).

The tract at residues 1–31 (MASAAPINLRAQDTPYVPPTSLPTSSSQTGS) is disordered. Topologically, residues 1–689 (MASAAPINLR…KRSTVASIAQ (689 aa)) are cytoplasmic. Low complexity predominate over residues 22 to 31 (LPTSSSQTGS). The GB1/RHD3-type G domain occupies 61–281 (GFSYNIVAVF…SSDYLFKPAY (221 aa)). Residue 71-78 (GSQSTGKS) participates in GTP binding. A coiled-coil region spans residues 458 to 482 (SWEEELELLRDEIRAVADQCRKDET). The chain crosses the membrane as a helical span at residues 690–710 (IPYWIYGVLVVLGWNEAMLVL). At 711–713 (FNP) the chain is on the lumenal side. Residues 714–734 (LYFAFLLLAMATSYIIAQLGL) traverse the membrane as a helical segment. Over 735–785 (VGPLFQVTRTVGSEIQRQATARLREHFSQPVLAEPVQVGPSRDREEVGQIQ) the chain is Cytoplasmic.

The protein belongs to the TRAFAC class dynamin-like GTPase superfamily. GB1/RHD3 GTPase family. RHD3 subfamily.

The protein localises to the endoplasmic reticulum membrane. Functionally, cooperates with the reticulon proteins and tubule-shaping DP1 family proteins to generate and maintain the structure of the tubular endoplasmic reticulum network. Has GTPase activity, which is required for its function in ER organization. This is Protein SEY1 from Laccaria bicolor (strain S238N-H82 / ATCC MYA-4686) (Bicoloured deceiver).